Reading from the N-terminus, the 628-residue chain is 1-deoxy-D-xylulose-5-phosphate synthase (628 aa).

Residues His72 and 113-115 each bind thiamine diphosphate; that span reads GHS. Asp144 is a binding site for Mg(2+). Residues 145–146, Asn173, Tyr284, and Glu363 contribute to the thiamine diphosphate site; that span reads GA. Residue Asn173 coordinates Mg(2+).

This sequence belongs to the transketolase family. DXPS subfamily. As to quaternary structure, homodimer. The cofactor is Mg(2+). Thiamine diphosphate is required as a cofactor.

It carries out the reaction D-glyceraldehyde 3-phosphate + pyruvate + H(+) = 1-deoxy-D-xylulose 5-phosphate + CO2. It functions in the pathway metabolic intermediate biosynthesis; 1-deoxy-D-xylulose 5-phosphate biosynthesis; 1-deoxy-D-xylulose 5-phosphate from D-glyceraldehyde 3-phosphate and pyruvate: step 1/1. Catalyzes the acyloin condensation reaction between C atoms 2 and 3 of pyruvate and glyceraldehyde 3-phosphate to yield 1-deoxy-D-xylulose-5-phosphate (DXP). In Brevibacillus brevis (strain 47 / JCM 6285 / NBRC 100599), this protein is 1-deoxy-D-xylulose-5-phosphate synthase.